Here is a 798-residue protein sequence, read N- to C-terminus: Serine/threonine-protein kinase SIK2 (798 aa).

The Protein kinase domain maps to 26 to 277; that stretch reads YDIERTLGKG…ISQIKQHKWM (252 aa). ATP contacts are provided by residues 32-40 and K55; that span reads LGKGNFAVV. The active-site Proton acceptor is the D148. T181 is modified (phosphothreonine). S185 is subject to Phosphoserine. One can recognise a UBA domain in the interval 302 to 342; it reads DYNEQVLGIMQTLGIDRQRTVESLQNSSYNHFAAIYYLLLE. The span at 351-361 shows a compositional bias: polar residues; that stretch reads QLSSRPATGRQ. Positions 351 to 382 are disordered; the sequence is QLSSRPATGRQQRPRSSEISNAEMPQDSLTSE. Phosphoserine is present on S575. A disordered region spans residues 672 to 691; the sequence is ACPQTSQTSATNGLPPSDSA. Over residues 673–685 the composition is skewed to polar residues; the sequence is CPQTSQTSATNGL.

Belongs to the protein kinase superfamily. CAMK Ser/Thr protein kinase family. SNF1 subfamily. Mg(2+) serves as cofactor. Phosphorylated at Thr-181 by STK11/LKB1 in complex with STE20-related adapter-alpha (STRADA) pseudo kinase and CAB39. As to expression, ubiquitously expressed in embryonic tissue.

It localises to the cytoplasm. The catalysed reaction is L-seryl-[protein] + ATP = O-phospho-L-seryl-[protein] + ADP + H(+). It carries out the reaction L-threonyl-[protein] + ATP = O-phospho-L-threonyl-[protein] + ADP + H(+). Activated by phosphorylation on Thr-181. Its function is as follows. Phosphorylates IRS1 in insulin-stimulated adipocytes, potentially modulating the efficiency of insulin signal transduction. Inhibits CREB activity by phosphorylating and repressing the CREB-specific coactivators, CRTC1-3. The sequence is that of Serine/threonine-protein kinase SIK2 (SIK2) from Gallus gallus (Chicken).